The following is a 214-amino-acid chain: MSLGLIGRKVGMTRIFTDEGESVPVTVLEVVPNRVTQIKTAASDGYTSLQVAYGERRASRIGKALAGHYAKAGVSAGAGIKEFPVSDDVLANYSVGGQITVELFQPGQLVDVTGTSLGKGFSGAIKRHNFSSNRASHGNSRSHNVPGSIGMAQDPGRVFPGKRMPGHLGAVKTTVQNLEIVRVDAERNLLLIKGAVPGSKGGDVVVRPSVKVKA.

Q153 carries the N5-methylglutamine modification.

This sequence belongs to the universal ribosomal protein uL3 family. As to quaternary structure, part of the 50S ribosomal subunit. Forms a cluster with proteins L14 and L19. Methylated by PrmB.

Its function is as follows. One of the primary rRNA binding proteins, it binds directly near the 3'-end of the 23S rRNA, where it nucleates assembly of the 50S subunit. The sequence is that of Large ribosomal subunit protein uL3 from Methylobacillus flagellatus (strain ATCC 51484 / DSM 6875 / VKM B-1610 / KT).